We begin with the raw amino-acid sequence, 343 residues long: Methionine import ATP-binding protein MetN (343 aa).

The 240-residue stretch at isoleucine 2 to isoleucine 241 folds into the ABC transporter domain. Position 38–45 (glycine 38–serine 45) interacts with ATP.

The protein belongs to the ABC transporter superfamily. Methionine importer (TC 3.A.1.24) family. In terms of assembly, the complex is composed of two ATP-binding proteins (MetN), two transmembrane proteins (MetI) and a solute-binding protein (MetQ).

It is found in the cell inner membrane. It catalyses the reaction L-methionine(out) + ATP + H2O = L-methionine(in) + ADP + phosphate + H(+). The enzyme catalyses D-methionine(out) + ATP + H2O = D-methionine(in) + ADP + phosphate + H(+). In terms of biological role, part of the ABC transporter complex MetNIQ involved in methionine import. Responsible for energy coupling to the transport system. The chain is Methionine import ATP-binding protein MetN from Photorhabdus laumondii subsp. laumondii (strain DSM 15139 / CIP 105565 / TT01) (Photorhabdus luminescens subsp. laumondii).